The chain runs to 99 residues: NADH-quinone oxidoreductase subunit K (99 aa).

The next 3 membrane-spanning stretches (helical) occupy residues 3 to 23 (PDNY…GVML), 28 to 48 (IVVF…FVTF), and 59 to 79 (VIAF…LGII).

The protein belongs to the complex I subunit 4L family. As to quaternary structure, NDH-1 is composed of 14 different subunits. Subunits NuoA, H, J, K, L, M, N constitute the membrane sector of the complex.

The protein resides in the cell membrane. The catalysed reaction is a quinone + NADH + 5 H(+)(in) = a quinol + NAD(+) + 4 H(+)(out). Its function is as follows. NDH-1 shuttles electrons from NADH, via FMN and iron-sulfur (Fe-S) centers, to quinones in the respiratory chain. The immediate electron acceptor for the enzyme in this species is believed to be a menaquinone. Couples the redox reaction to proton translocation (for every two electrons transferred, four hydrogen ions are translocated across the cytoplasmic membrane), and thus conserves the redox energy in a proton gradient. The protein is NADH-quinone oxidoreductase subunit K of Mycobacteroides abscessus (strain ATCC 19977 / DSM 44196 / CCUG 20993 / CIP 104536 / JCM 13569 / NCTC 13031 / TMC 1543 / L948) (Mycobacterium abscessus).